The sequence spans 408 residues: Serine/threonine-protein kinase UCNL (408 aa).

Residues Ile-21–Phe-341 form the Protein kinase domain. ATP-binding positions include Leu-27–Val-35 and Lys-54. The Proton acceptor role is filled by Asp-152. The AGC-kinase C-terminal domain maps to Ala-342–Phe-408.

It belongs to the protein kinase superfamily. AGC Ser/Thr protein kinase family. As to expression, expressed in the epidermis and cortex of the transition zone of the root apex. Expressed in rosette leaves, stems, flowers and siliques.

Its subcellular location is the cytoplasm. The protein resides in the nucleus. It catalyses the reaction L-seryl-[protein] + ATP = O-phospho-L-seryl-[protein] + ADP + H(+). It carries out the reaction L-threonyl-[protein] + ATP = O-phospho-L-threonyl-[protein] + ADP + H(+). Its function is as follows. Regulates planar ovule integument development. The sequence is that of Serine/threonine-protein kinase UCNL from Arabidopsis thaliana (Mouse-ear cress).